A 632-amino-acid polypeptide reads, in one-letter code: Acyl-coenzyme A oxidase-like protein (632 aa).

Position 376–381 (376–381) interacts with FAD; sequence TGGMGY.

Belongs to the acyl-CoA oxidase family. Requires FAD as cofactor.

This chain is Acyl-coenzyme A oxidase-like protein (Acoxl), found in Mus musculus (Mouse).